The following is a 255-amino-acid chain: Ribonuclease HII (255 aa).

Residues 72–255 enclose the RNase H type-2 domain; the sequence is AIICGIDEVG…KSFEPIKSLL (184 aa). A divalent metal cation is bound by residues Asp78, Glu79, and Asp170.

The protein belongs to the RNase HII family. Mn(2+) serves as cofactor. Requires Mg(2+) as cofactor.

The protein resides in the cytoplasm. The enzyme catalyses Endonucleolytic cleavage to 5'-phosphomonoester.. Functionally, endonuclease that specifically degrades the RNA of RNA-DNA hybrids. The chain is Ribonuclease HII from Staphylococcus aureus (strain USA300).